The primary structure comprises 710 residues: Choline transporter-like protein 5 (710 aa).

Positions 1 to 21 are disordered; the sequence is MARKRKPPSSQGDPRRYDPDF. Over 1–32 the chain is Cytoplasmic; the sequence is MARKRKPPSSQGDPRRYDPDFQGPTAKRTCTD. The helical transmembrane segment at 33–53 threads the bilayer; the sequence is VLCCLIFLLFILGYVLLGLLA. Topologically, residues 54 to 236 are extracellular; sequence WAHGDPRKMA…KLLEDYATSW (183 aa). 2 N-linked (GlcNAc...) asparagine glycosylation sites follow: asparagine 82 and asparagine 184. Residues 237-257 traverse the membrane as a helical segment; that stretch reads KWILIGLTVAMALSWTFLILL. Topologically, residues 258-260 are cytoplasmic; it reads RFT. Residues 261–281 form a helical membrane-spanning segment; the sequence is AGFLFWFFIFGVLGIIGYGIW. At 282–319 the chain is on the extracellular side; the sequence is YCFLEYSSIQQRPQSTFWMYGFGIQRRVNMFFHLKETW. The chain crosses the membrane as a helical span at residues 320-340; it reads FSMMIILSAIEIIIIIVLIFL. Residues 341-345 are Cytoplasmic-facing; the sequence is RTRIQ. The chain crosses the membrane as a helical span at residues 346 to 366; that stretch reads VAIILLQEGSKAISYLPSALI. Topologically, residues 367-368 are extracellular; sequence YP. The helical transmembrane segment at 369–389 threads the bilayer; it reads VLTFILLSICISYWAVTAVFL. Over 390-454 the chain is Cytoplasmic; that stretch reads ATSGVPIFKV…NYILTFQVYN (65 aa). The helical transmembrane segment at 455-475 threads the bilayer; it reads LFAFLWLINFVIALGQCALAG. The Extracellular segment spans residues 476-509; the sequence is AFASYYWAMKKPDDIPPYPLFTAFGRAVRYHTGS. Residues 510–530 form a helical membrane-spanning segment; that stretch reads LAFGSLILASVQMFKVIVEYL. The Cytoplasmic segment spans residues 531 to 604; sequence DRRLKKAQNS…KVTVTDEVTY (74 aa). A helical transmembrane segment spans residues 605–625; that stretch reads FVLLLGKVLVSGIVGVLAFLL. Topologically, residues 626-643 are extracellular; the sequence is FTERLQIIVDGPTTLNYY. Residues 644–664 form a helical membrane-spanning segment; sequence WVPFLTLVFGSYMIAHGFFSV. At 665-710 the chain is on the cytoplasmic side; the sequence is YSMCVETIFICFLEDLERNEGSPSRPYFVTPALMNILLEQGKIKKQ.

This sequence belongs to the CTL (choline transporter-like) family.

The protein localises to the cell membrane. The catalysed reaction is choline(out) + n H(+)(in) = choline(in) + n H(+)(out). In terms of biological role, choline/H+ antiporter. The sequence is that of Choline transporter-like protein 5 (Slc44a5) from Mus musculus (Mouse).